We begin with the raw amino-acid sequence, 551 residues long: Glucans biosynthesis protein D (551 aa).

The segment at residues 1-32 (MNRRRFIKGSMAMAAVCGSSGIASLFSQAAFA) is a signal peptide (tat-type signal).

Belongs to the OpgD/OpgG family. Predicted to be exported by the Tat system. The position of the signal peptide cleavage has not been experimentally proven.

It localises to the periplasm. It participates in glycan metabolism; osmoregulated periplasmic glucan (OPG) biosynthesis. Functionally, probably involved in the control of the structural glucose backbone of osmoregulated periplasmic glucans (OPGs). This is Glucans biosynthesis protein D (mdoD) from Salmonella typhimurium (strain LT2 / SGSC1412 / ATCC 700720).